Reading from the N-terminus, the 151-residue chain is Meiotically up-regulated gene 114 protein (151 aa).

The protein resides in the cytoplasm. Functionally, has a role in meiosis. The chain is Meiotically up-regulated gene 114 protein (mug114) from Schizosaccharomyces pombe (strain 972 / ATCC 24843) (Fission yeast).